A 2220-amino-acid chain; its full sequence is Calcineurin-binding protein cabin-1 (2220 aa).

Residues S10 and S11 each carry the phosphoserine modification. Phosphothreonine is present on T12. S20 and S66 each carry phosphoserine. 3 TPR repeats span residues 36–69 (AFAL…SLLR), 90–123 (YSTY…DSTD), and 125–157 (NLWY…NPDH). A disordered region spans residues 361–400 (GAPVGDISGGDKSKKGVKRKKISEESGETAKRRSARVRNT). The segment covering 382-391 (ISEESGETAK) has biased composition (basic and acidic residues). Phosphoserine is present on residues S433 and S450. The stretch at 615–648 (VRVYWLKARFLALQGDMEQALENYDICTEMLQSS) is one TPR 4 repeat. S673 bears the Phosphoserine mark. TPR repeat units follow at residues 1055 to 1088 (NELY…CPNR) and 1106 to 1139 (KLNS…DSSN). Disordered regions lie at residues 1299–1476 (FARG…STPT), 1668–1845 (AEGS…RLSR), 1916–2165 (AQRQ…GSIS), and 2197–2220 (VLET…YMDI). Basic and acidic residues predominate over residues 1301–1324 (RGEEKNTPKASEKEKACLVDEDSH). Low complexity predominate over residues 1327-1349 (AGTLPGPGASLPSSSGPGLTSPP). Residues 1377–1397 (DSTAVALSDSSSTQDFFNEPT) show a composition bias toward polar residues. Basic and acidic residues predominate over residues 1402–1412 (GSRKSYTEKRL). A Phosphoserine modification is found at S1439. A compositionally biased stretch (gly residues) spans 1715–1725 (SGPGPEPGGKV). Composition is skewed to basic and acidic residues over residues 1744–1753 (SGERKDKESP) and 1784–1794 (PARDRGPESRP). The span at 1812–1823 (PLTPAQPAPAPA) shows a compositional bias: pro residues. Polar residues-rich tracts occupy residues 1918 to 1927 (RQASGDTPTT) and 1975 to 1989 (TIIT…STLD). T1924 carries the post-translational modification Phosphothreonine. The segment covering 2070-2081 (GKLRPEPRRDGE) has biased composition (basic and acidic residues). A compositionally biased stretch (low complexity) spans 2091–2112 (PLSSPPTAASSKAPSSGSAQPP). S2094 is subject to Phosphoserine. The segment at 2116-2153 (PGKPEPSRAKSRPLPNMPKLVIPSAATKFPPEITVTPP) is required for interaction with calcineurin. T2151 and T2154 each carry phosphothreonine. Positions 2207 to 2220 (LESETDEDDDYMDI) are enriched in acidic residues.

As to quaternary structure, component of a complex that includes at least ASF1A, CABIN1, HIRA, histone H3.3 and UBN1. Interacts with calcineurin. Interacts with MEF2B. In terms of processing, activated through PKC-mediated hyperphosphorylation. Phosphorylation by the DNA damage kinases ATM and CHK2 enhances ubiquitination. Post-translationally, upon genotoxic stress, ubiquitination by the DCX(DDB2) E3 ubiquitin-protein ligase complex targets CABIN1 for proteasomal degradation, leading to the release of p53/TP53. As to expression, widely expressed in different tissues.

It localises to the nucleus. May be required for replication-independent chromatin assembly. May serve as a negative regulator of T-cell receptor (TCR) signaling via inhibition of calcineurin. Inhibition of activated calcineurin is dependent on both PKC and calcium signals. Acts as a negative regulator of p53/TP53 by keeping p53 in an inactive state on chromatin at promoters of a subset of it's target genes. This is Calcineurin-binding protein cabin-1 (CABIN1) from Homo sapiens (Human).